The primary structure comprises 271 residues: Mannosyl-3-phosphoglycerate phosphatase (271 aa).

Catalysis depends on aspartate 13, which acts as the Nucleophile. Mg(2+) is bound by residues aspartate 13, aspartate 15, and aspartate 214.

It belongs to the HAD-like hydrolase superfamily. MPGP family. It depends on Mg(2+) as a cofactor.

It localises to the cytoplasm. The enzyme catalyses 2-O-(alpha-D-mannosyl)-3-phosphoglycerate + H2O = (2R)-2-O-(alpha-D-mannosyl)-glycerate + phosphate. This is Mannosyl-3-phosphoglycerate phosphatase from Escherichia coli (strain SE11).